Here is a 219-residue protein sequence, read N- to C-terminus: Large ribosomal subunit protein bL31m (219 aa).

2 stretches are compositionally biased toward basic and acidic residues: residues 169–181 (KKEE…KAAE) and 210–219 (KETRHYGKKK). Disordered regions lie at residues 169–188 (KKEE…ADPF) and 200–219 (TENM…GKKK).

The protein belongs to the bacterial ribosomal protein bL31 family. Highly divergent. Component of the mitochondrial large ribosomal subunit (mt-LSU). Mature N.crassa 74S mitochondrial ribosomes consist of a small (37S) and a large (54S) subunit. The 37S small subunit contains a 16S ribosomal RNA (16S mt-rRNA) and 32 different proteins. The 54S large subunit contains a 23S rRNA (23S mt-rRNA) and 42 different proteins. bL31m bridges the mt-LSU central protuberance and the mt-SSU head.

The protein resides in the mitochondrion. Its function is as follows. Component of the mitochondrial ribosome (mitoribosome), a dedicated translation machinery responsible for the synthesis of mitochondrial genome-encoded proteins, including at least some of the essential transmembrane subunits of the mitochondrial respiratory chain. The mitoribosomes are attached to the mitochondrial inner membrane and translation products are cotranslationally integrated into the membrane. The polypeptide is Large ribosomal subunit protein bL31m (mrpl36) (Neurospora crassa (strain ATCC 24698 / 74-OR23-1A / CBS 708.71 / DSM 1257 / FGSC 987)).